The sequence spans 164 residues: Large ribosomal subunit protein bL9 (164 aa).

The protein belongs to the bacterial ribosomal protein bL9 family.

Functionally, binds to the 23S rRNA. This Borrelia hermsii (strain HS1 / DAH) protein is Large ribosomal subunit protein bL9.